Reading from the N-terminus, the 91-residue chain is Acylphosphatase (91 aa).

The Acylphosphatase-like domain occupies 3–91 (KLRMNVQGRV…EETEQFKVIQ (89 aa)). Active-site residues include arginine 18 and asparagine 36.

This sequence belongs to the acylphosphatase family.

It carries out the reaction an acyl phosphate + H2O = a carboxylate + phosphate + H(+). The sequence is that of Acylphosphatase (acyP) from Enterococcus faecalis (strain ATCC 700802 / V583).